The primary structure comprises 407 residues: CCA-adding enzyme (407 aa).

ATP-binding residues include Gly32 and Arg35. CTP-binding residues include Gly32 and Arg35. Positions 45 and 47 each coordinate Mg(2+). The ATP site is built by Arg116, Asp159, Arg162, Arg165, and Arg168. CTP is bound by residues Arg116, Asp159, Arg162, Arg165, and Arg168.

It belongs to the tRNA nucleotidyltransferase/poly(A) polymerase family. Bacterial CCA-adding enzyme type 3 subfamily. In terms of assembly, homodimer. Requires Mg(2+) as cofactor.

It catalyses the reaction a tRNA precursor + 2 CTP + ATP = a tRNA with a 3' CCA end + 3 diphosphate. The catalysed reaction is a tRNA with a 3' CCA end + 2 CTP + ATP = a tRNA with a 3' CCACCA end + 3 diphosphate. Functionally, catalyzes the addition and repair of the essential 3'-terminal CCA sequence in tRNAs without using a nucleic acid template. Adds these three nucleotides in the order of C, C, and A to the tRNA nucleotide-73, using CTP and ATP as substrates and producing inorganic pyrophosphate. tRNA 3'-terminal CCA addition is required both for tRNA processing and repair. Also involved in tRNA surveillance by mediating tandem CCA addition to generate a CCACCA at the 3' terminus of unstable tRNAs. While stable tRNAs receive only 3'-terminal CCA, unstable tRNAs are marked with CCACCA and rapidly degraded. This chain is CCA-adding enzyme, found in Lactiplantibacillus plantarum (strain ATCC BAA-793 / NCIMB 8826 / WCFS1) (Lactobacillus plantarum).